The primary structure comprises 357 residues: Dynein axonemal assembly factor 10 (357 aa).

WD repeat units follow at residues Glu-80–Trp-127, Ala-132–Asn-170, Glu-184–Thr-223, and Glu-277–Val-321.

In terms of assembly, interacts with PIH1D1; the interaction associates DNAAF10 with the R2TP complex. Interacts with several dynein axonemal assembly factors.

It is found in the dynein axonemal particle. Its function is as follows. Key assembly factor specifically required for the stability of axonemal dynein heavy chains in cytoplasm. This chain is Dynein axonemal assembly factor 10 (dnaaf10), found in Dictyostelium discoideum (Social amoeba).